The primary structure comprises 780 residues: Lon protease (780 aa).

The Lon N-terminal domain occupies 11–204 (IPVLPLRDVV…RLMAIMESEI (194 aa)). 356–363 (GPPGVGKT) is a binding site for ATP. The 182-residue stretch at 592-773 (KNQIGQVIGL…KEVLNLSLEN (182 aa)) folds into the Lon proteolytic domain. Residues Ser-679 and Lys-722 contribute to the active site.

Belongs to the peptidase S16 family. As to quaternary structure, homohexamer. Organized in a ring with a central cavity.

The protein resides in the cytoplasm. The catalysed reaction is Hydrolysis of proteins in presence of ATP.. ATP-dependent serine protease that mediates the selective degradation of mutant and abnormal proteins as well as certain short-lived regulatory proteins. Required for cellular homeostasis and for survival from DNA damage and developmental changes induced by stress. Degrades polypeptides processively to yield small peptide fragments that are 5 to 10 amino acids long. Binds to DNA in a double-stranded, site-specific manner. The sequence is that of Lon protease from Buchnera aphidicola subsp. Baizongia pistaciae (strain Bp).